A 248-amino-acid polypeptide reads, in one-letter code: UPF0280 protein Maeo_0343 (248 aa).

It belongs to the UPF0280 family.

The protein is UPF0280 protein Maeo_0343 of Methanococcus aeolicus (strain ATCC BAA-1280 / DSM 17508 / OCM 812 / Nankai-3).